The primary structure comprises 397 residues: Elongation factor Tu (397 aa).

One can recognise a tr-type G domain in the interval 10–206; that stretch reads KPHVNIGTIG…AVDDSIPEPQ (197 aa). Positions 19–26 are G1; that stretch reads GHIDHGKT. 19–26 provides a ligand contact to GTP; it reads GHIDHGKT. Thr26 contacts Mg(2+). The interval 62 to 66 is G2; it reads GITIS. The tract at residues 83–86 is G3; the sequence is DCPG. GTP is bound by residues 83–87 and 138–141; these read DCPGH and NKAD. The tract at residues 138-141 is G4; that stretch reads NKAD. Residues 176–178 form a G5 region; it reads SAL.

This sequence belongs to the TRAFAC class translation factor GTPase superfamily. Classic translation factor GTPase family. EF-Tu/EF-1A subfamily. As to quaternary structure, monomer.

It is found in the cytoplasm. It catalyses the reaction GTP + H2O = GDP + phosphate + H(+). GTP hydrolase that promotes the GTP-dependent binding of aminoacyl-tRNA to the A-site of ribosomes during protein biosynthesis. This is Elongation factor Tu from Frankia alni (strain DSM 45986 / CECT 9034 / ACN14a).